We begin with the raw amino-acid sequence, 248 residues long: Probable transcriptional regulatory protein FTF0655 (248 aa).

It belongs to the TACO1 family.

Its subcellular location is the cytoplasm. This Francisella tularensis subsp. tularensis (strain FSC 198) protein is Probable transcriptional regulatory protein FTF0655.